The chain runs to 104 residues: Type VII secretion system extracellular protein B (104 aa).

It belongs to the WXG100 family. Homodimer. When mixed with EsxA does not form heterodimers. Forms heterodimers with EsxD.

The protein localises to the secreted. Virulence factor that is important for the establishment of infection in the host. EsxB is required for EsxA synthesis as well as secretion. Mediates together with EsxA the release of S.aureus from the host cell. Also inhibits host cytokine production and thus modulates dendritic cell-mediated immunity. The protein is Type VII secretion system extracellular protein B of Staphylococcus aureus (strain USA300).